A 219-amino-acid chain; its full sequence is Octanoyltransferase (219 aa).

Positions 31–206 constitute a BPL/LPL catalytic domain; the sequence is DEDVDQIWLV…ELVELLGYDQ (176 aa). Substrate-binding positions include 70–77, 137–139, and 150–152; these read RGGQVTYH, SLG, and GLA. Cys-168 serves as the catalytic Acyl-thioester intermediate.

It belongs to the LipB family.

The protein localises to the cytoplasm. The catalysed reaction is octanoyl-[ACP] + L-lysyl-[protein] = N(6)-octanoyl-L-lysyl-[protein] + holo-[ACP] + H(+). The protein operates within protein modification; protein lipoylation via endogenous pathway; protein N(6)-(lipoyl)lysine from octanoyl-[acyl-carrier-protein]: step 1/2. In terms of biological role, catalyzes the transfer of endogenously produced octanoic acid from octanoyl-acyl-carrier-protein onto the lipoyl domains of lipoate-dependent enzymes. Lipoyl-ACP can also act as a substrate although octanoyl-ACP is likely to be the physiological substrate. The polypeptide is Octanoyltransferase (Vibrio atlanticus (strain LGP32) (Vibrio splendidus (strain Mel32))).